The sequence spans 133 residues: p53 and DNA damage-regulated protein 1 (133 aa).

Belongs to the prefoldin subunit beta family. In terms of assembly, component of the PAQosome complex which is responsible for the biogenesis of several protein complexes and which consists of R2TP complex members RUVBL1, RUVBL2, RPAP3 and PIH1D1, URI complex members PFDN2, PFDN6, PDRG1, UXT and URI1 as well as ASDURF, POLR2E and DNAAF10/WDR92.

It is found in the cytoplasm. May play a role in chaperone-mediated protein folding. This chain is p53 and DNA damage-regulated protein 1 (PDRG1), found in Bos taurus (Bovine).